The chain runs to 707 residues: Acetyl-coenzyme A synthetase 1 (707 aa).

Residues 242–245 (RGGK) and threonine 361 contribute to the CoA site. ATP contacts are provided by residues 437–439 (GEP), 461–466 (DTYWQT), aspartate 553, and arginine 568. Serine 576 is a CoA binding site. Arginine 579 is an ATP binding site. A CoA-binding site is contributed by arginine 644. Positions 705-707 (VKL) match the Microbody targeting signal motif.

This sequence belongs to the ATP-dependent AMP-binding enzyme family.

The protein localises to the microsome. Its subcellular location is the endoplasmic reticulum. The enzyme catalyses acetate + ATP + CoA = acetyl-CoA + AMP + diphosphate. In terms of biological role, may be required for assimilation of ethanol and acetate. The sequence is that of Acetyl-coenzyme A synthetase 1 (ACS1) from Kluyveromyces lactis (strain ATCC 8585 / CBS 2359 / DSM 70799 / NBRC 1267 / NRRL Y-1140 / WM37) (Yeast).